Reading from the N-terminus, the 326-residue chain is Tetraacyldisaccharide 4'-kinase (326 aa).

ATP is bound at residue 55–62 (TAGGNGKT).

It belongs to the LpxK family.

It carries out the reaction a lipid A disaccharide + ATP = a lipid IVA + ADP + H(+). It participates in glycolipid biosynthesis; lipid IV(A) biosynthesis; lipid IV(A) from (3R)-3-hydroxytetradecanoyl-[acyl-carrier-protein] and UDP-N-acetyl-alpha-D-glucosamine: step 6/6. Transfers the gamma-phosphate of ATP to the 4'-position of a tetraacyldisaccharide 1-phosphate intermediate (termed DS-1-P) to form tetraacyldisaccharide 1,4'-bis-phosphate (lipid IVA). The protein is Tetraacyldisaccharide 4'-kinase of Erwinia tasmaniensis (strain DSM 17950 / CFBP 7177 / CIP 109463 / NCPPB 4357 / Et1/99).